A 52-amino-acid chain; its full sequence is Conotoxin Cal6.36 (52 aa).

The first 22 residues, 1–22 (MKVTCVLTLAVLILTVGQMVTA), serve as a signal peptide directing secretion. 3 cysteine pairs are disulfide-bonded: C24–C39, C31–C43, and C38–C47.

Expressed by the venom duct.

It localises to the secreted. Its function is as follows. Probable neurotoxin. The chain is Conotoxin Cal6.36 from Californiconus californicus (California cone).